Consider the following 638-residue polypeptide: MNDTIHATDAAHAPHSTQQHSMRALAIAAIGVVFGDIGTSPLYSLKEAFSPAHGIPLTEGSILGVISLLFWAIILVVGIKYLLFVMRADNNGEGGVLALMALSLRPLDSKTRVAGALMALGIFGACMFYGDAVITPAISVMSAVEGLEIATPHLSHLVLPITIVILIALFWIQRHGTALVGKLFGPIMVLWFVAIAALGVYHIVRVPGIMAAINPYYAASFMADHLLQAYVVLGSVVLVLTGAEALYADMGHFGAKPIRIAAYGLVMPSLVLNYFGQGALLIQNPKAIENPFFLLAPEWGLLPLVILSTVATVIASQAVISGAYSLTSQAIQLGYVPRMKVLHTSELAIGQIYVPVVNWLLLFVILCIVIGFKSSDNLAAAYGIAVTATMVITTVLAAVVMVKVWNWNRLLVGAIIAVFLAVDLGFFGANLLKVAQGGWLPLGIGALLFFLLMTWYKGRHIVKERTAADGIPLEPFLQGLLAHPPHRVSGTAIYLTGNDKLVPVSLLHNLKHNKVLHERTIFLTFVTRDIPYVRDDKRQTSRDAGGGLYIVRAEYGFNETPDVKAVLEEFGRTHDMTFELMDTSFFLARETVVPTHLPGMSIWRERVFAWMHQNAAKPTDFFSIPANRVVELGTKIEI.

12 helical membrane-spanning segments follow: residues 25–45, 65–85, 114–134, 152–172, 184–204, 226–246, 262–282, 291–311, 352–372, 382–402, 410–430, and 434–454; these read LAIA…LYSL, VISL…LLFV, AGAL…DAVI, PHLS…LFWI, FGPI…YHIV, LLQA…AEAL, AYGL…ALLI, PFFL…STVA, IYVP…VIGF, YGIA…VVMV, LLVG…FGAN, and VAQG…LLMT.

Belongs to the HAK/KUP transporter (TC 2.A.72) family.

Its subcellular location is the cell inner membrane. The catalysed reaction is K(+)(in) + H(+)(in) = K(+)(out) + H(+)(out). Its function is as follows. Transport of potassium into the cell. Likely operates as a K(+):H(+) symporter. The chain is Probable potassium transport system protein Kup from Burkholderia lata (strain ATCC 17760 / DSM 23089 / LMG 22485 / NCIMB 9086 / R18194 / 383).